The sequence spans 516 residues: GMP synthase [glutamine-hydrolyzing] (516 aa).

One can recognise a Glutamine amidotransferase type-1 domain in the interval 8 to 198 (KILILDFGSQ…VVNICGCDTL (191 aa)). Residue Cys-84 is the Nucleophile of the active site. Catalysis depends on residues His-172 and Glu-174. The GMPS ATP-PPase domain maps to 199–391 (WNIENIIEND…LGLPYNMLYR (193 aa)). 226 to 232 (SGGVDSS) provides a ligand contact to ATP.

Homodimer.

The catalysed reaction is XMP + L-glutamine + ATP + H2O = GMP + L-glutamate + AMP + diphosphate + 2 H(+). It functions in the pathway purine metabolism; GMP biosynthesis; GMP from XMP (L-Gln route): step 1/1. In terms of biological role, catalyzes the synthesis of GMP from XMP. This Francisella tularensis subsp. tularensis (strain FSC 198) protein is GMP synthase [glutamine-hydrolyzing].